A 150-amino-acid polypeptide reads, in one-letter code: Large ribosomal subunit protein uL11 (150 aa).

The protein belongs to the universal ribosomal protein uL11 family. As to quaternary structure, part of the ribosomal stalk of the 50S ribosomal subunit. Interacts with L10 and the large rRNA to form the base of the stalk. L10 forms an elongated spine to which L12 dimers bind in a sequential fashion forming a multimeric L10(L12)X complex. One or more lysine residues are methylated.

Forms part of the ribosomal stalk which helps the ribosome interact with GTP-bound translation factors. In Jannaschia sp. (strain CCS1), this protein is Large ribosomal subunit protein uL11.